The primary structure comprises 148 residues: Transcription antitermination protein NusB (148 aa).

Belongs to the NusB family.

Its function is as follows. Involved in transcription antitermination. Required for transcription of ribosomal RNA (rRNA) genes. Binds specifically to the boxA antiterminator sequence of the ribosomal RNA (rrn) operons. In Desulfitobacterium hafniense (strain DSM 10664 / DCB-2), this protein is Transcription antitermination protein NusB.